We begin with the raw amino-acid sequence, 363 residues long: Flagellar P-ring protein (363 aa).

An N-terminal signal peptide occupies residues 1–20; that stretch reads MKCKLIFAVFMLAFSMPSQA.

The protein belongs to the FlgI family. In terms of assembly, the basal body constitutes a major portion of the flagellar organelle and consists of four rings (L,P,S, and M) mounted on a central rod.

It is found in the periplasm. The protein resides in the bacterial flagellum basal body. In terms of biological role, assembles around the rod to form the L-ring and probably protects the motor/basal body from shearing forces during rotation. The chain is Flagellar P-ring protein from Shewanella oneidensis (strain ATCC 700550 / JCM 31522 / CIP 106686 / LMG 19005 / NCIMB 14063 / MR-1).